We begin with the raw amino-acid sequence, 256 residues long: 1-(5-phosphoribosyl)-5-[(5-phosphoribosylamino)methylideneamino] imidazole-4-carboxamide isomerase (256 aa).

Aspartate 8 serves as the catalytic Proton acceptor. The active-site Proton donor is aspartate 129.

Belongs to the HisA/HisF family.

It is found in the cytoplasm. The enzyme catalyses 1-(5-phospho-beta-D-ribosyl)-5-[(5-phospho-beta-D-ribosylamino)methylideneamino]imidazole-4-carboxamide = 5-[(5-phospho-1-deoxy-D-ribulos-1-ylimino)methylamino]-1-(5-phospho-beta-D-ribosyl)imidazole-4-carboxamide. The protein operates within amino-acid biosynthesis; L-histidine biosynthesis; L-histidine from 5-phospho-alpha-D-ribose 1-diphosphate: step 4/9. This chain is 1-(5-phosphoribosyl)-5-[(5-phosphoribosylamino)methylideneamino] imidazole-4-carboxamide isomerase, found in Synechococcus sp. (strain WH7803).